The following is a 1077-amino-acid chain: MLRAVLQANKNGVPLSKLQAEYKSFTGEPIPFKDMGFHALDAYLKSIPSVVRIEVSRVGEVICYAVVCKETARIAALVAHQRSSKKKSGGQVNCQMRLKYTAPVSHFGKPKATLRQPGFTPPQEKIIRKPVPTSAWGKGNTFGSRTFEYSPPPIPQLFGIAPIQMHLPNINRPERKVTLPPRFQREVNSFLNPTPMTDSNANHTQSLKSVVPGSGQPRCDLSVIQNNLKELLNKHSNGLWLSKLPQLYKETYKQDLGGEMLKQVPSWTHICMVQKLVTMGHTEMVLYSTAIKQPSFTKNVQNHSNNQAKPNVPVDSTPSSPPLQSSGNIPKDELKQKISKVLTKYSNGLWYHALPKVFEDMFKQKLPTEVLNLDSLTDICTVDLISEEPFKAILYAKSAERANQNSNPSVNNNIPQKLQDRESPLLPEEPEMNMTPPPLVIPSEASPSVLVVELSSTNDVVIRYIGRDYSAAQEHMEDEMKDFCSKSSTAKIGFLRVGQLVAAKAEEDVWLRAQISAIEGKKVKVCYVDYGFSEIVDITKVCKLGKQFYTLPFQATKCRLAGLEAFCDDSIIIKALELKACGKILAVEILEKSEKPLVVLYDTSGDDDININAACLKELCDRSLSLQLKANSSFSNVIVTNVCSDGTLFCQLPSKGLAKLYETLQKVDSEFQSKQVTSHLYVSLPFCGKICLYHYKGKWARVEITSVHSSRALDVQFLDSGTIASVKVSELKEIPPPLLRDLISIPPQALRCCLADLPLRIGMWTPDAVLWLRNTVLNCLECSIRVVKVDEATNMVHIYLFTSNNFPDLERSINRQITNEELWKHQKDVFLNLSASTLESSRGGGAQASELSPPGLCKDHTSAVKKPDMQQSSSVPSFNMPPPLPLPRPGEHMDVFVSVACHPGHFVCQPWQELHKLEVVMEEMLLHYSTTEEKPVALEKNKLYAAKVENKWYRVLVKGILTNGLVSVYELDYGRHELVSCRKVQPLIEKFMQLPFQAITSQLAGVSCEHWSEEASIVFRNHVEKKPLVALVQTIHESTHPWDRRAVAYIVDTSLPDTDIWIHELMTEYHIQLSKPE.

2 consecutive HTH OST-type domains span residues Met-1–Val-67 and Asp-220–Thr-289. A compositionally biased stretch (polar residues) spans Val-300–Asn-328. The disordered stretch occupies residues Val-300–Lys-331. Residues Pro-330–Ser-398 form the HTH OST-type 3 domain. Tudor domains lie at Phe-494–Leu-551 and Leu-684–Asp-741. The disordered stretch occupies residues Ser-841–Pro-883. A compositionally biased stretch (basic and acidic residues) spans Cys-857–Asp-868.

Belongs to the TDRD7 family.

Its subcellular location is the cytoplasm. In terms of biological role, component of specific cytoplasmic RNA granules involved in post-transcriptional regulation of specific genes: probably acts by binding to specific mRNAs and regulating their translation. Probably required during spermatogenesis. In Xenopus tropicalis (Western clawed frog), this protein is Tudor domain-containing protein 7 (tdrd7).